Reading from the N-terminus, the 993-residue chain is Mediator of RNA polymerase II transcription subunit 24 (993 aa).

Ser-827 and Ser-829 each carry phosphoserine.

This sequence belongs to the Mediator complex subunit 24 family. As to quaternary structure, component of the Mediator complex, which includes at least CDK8, MED4, MED6, MED11, MED14, MED17, MED18, MED20, MED21, MED22, MED27, MED28, MED30 and MED31.

It localises to the nucleus. In terms of biological role, component of the Mediator complex, a coactivator involved in the regulated transcription of nearly all RNA polymerase II-dependent genes. Mediator functions as a bridge to convey information from gene-specific regulatory proteins to the basal RNA polymerase II transcription machinery. Mediator is recruited to promoters by direct interactions with regulatory proteins and serves as a scaffold for the assembly of a functional preinitiation complex with RNA polymerase II and the general transcription factors. Required for activated transcription of the MtnA, MtnB and MtnD genes. The polypeptide is Mediator of RNA polymerase II transcription subunit 24 (MED24) (Drosophila melanogaster (Fruit fly)).